We begin with the raw amino-acid sequence, 454 residues long: Cobyrinate a,c-diamide synthase (454 aa).

In terms of domain architecture, GATase cobBQ-type spans 244 to 440 (RLGIAKDKAF…LHVHFYQNPK (197 aa)). Cys-326 serves as the catalytic Nucleophile.

Belongs to the CobB/CbiA family. Mg(2+) is required as a cofactor.

The catalysed reaction is cob(II)yrinate + 2 L-glutamine + 2 ATP + 2 H2O = cob(II)yrinate a,c diamide + 2 L-glutamate + 2 ADP + 2 phosphate + 2 H(+). It functions in the pathway cofactor biosynthesis; adenosylcobalamin biosynthesis; cob(II)yrinate a,c-diamide from sirohydrochlorin (anaerobic route): step 10/10. Functionally, catalyzes the ATP-dependent amidation of the two carboxylate groups at positions a and c of cobyrinate, using either L-glutamine or ammonia as the nitrogen source. The sequence is that of Cobyrinate a,c-diamide synthase from Limosilactobacillus reuteri subsp. reuteri (strain JCM 1112) (Lactobacillus reuteri).